A 174-amino-acid polypeptide reads, in one-letter code: 2-hydroxy-palmitic acid dioxygenase MPO1 (174 aa).

Residues 1 to 23 (MGEGLLDLRSQLGFYKFYHHNPK) lie on the Cytoplasmic side of the membrane. The helical transmembrane segment at 24–44 (NVLIHSIFVPTILFSGSCMLH) threads the bilayer. Topologically, residues 45 to 63 (RVKIYQSISLTAVLSVLFS) are lumenal. The chain crosses the membrane as a helical span at residues 64–84 (IFYCLLYLPTGLLAGVLLLLL). Topologically, residues 85–98 (NLALIDHRVDLTFK) are cytoplasmic. The helical transmembrane segment at 99 to 119 (QELGLFTIGWIFQFVGHGVFE) threads the bilayer. Residues 120–131 (KRRPALIDNLVQ) lie on the Lumenal side of the membrane. The chain crosses the membrane as a helical span at residues 132–152 (SLVLAPYFIMFEFLFKLGFMP). The Cytoplasmic segment spans residues 153-174 (RLKATLEHDLEIKQRNLRMQRQ).

It belongs to the MPO1 family. Fe(2+) is required as a cofactor.

It is found in the endoplasmic reticulum membrane. It catalyses the reaction (R)-2-hydroxyhexadecanoate + O2 = pentadecanoate + CO2 + H2O. Its function is as follows. Dioxygenase that catalyzes the alpha-oxidation of 2-hydroxy fatty acids in an iron-dependent manner. Involved in metabolism of phytosphingosine and is required for proper endoplasmic reticulum stress response. The sequence is that of 2-hydroxy-palmitic acid dioxygenase MPO1 from Saccharomyces cerevisiae (strain ATCC 204508 / S288c) (Baker's yeast).